A 226-amino-acid chain; its full sequence is 7-cyano-7-deazaguanine synthase (226 aa).

7 to 17 (LSGGMDSLVTT) is a binding site for ATP. Positions 187, 195, 198, and 201 each coordinate Zn(2+).

It belongs to the QueC family. It depends on Zn(2+) as a cofactor.

The catalysed reaction is 7-carboxy-7-deazaguanine + NH4(+) + ATP = 7-cyano-7-deazaguanine + ADP + phosphate + H2O + H(+). Its pathway is purine metabolism; 7-cyano-7-deazaguanine biosynthesis. In terms of biological role, catalyzes the ATP-dependent conversion of 7-carboxy-7-deazaguanine (CDG) to 7-cyano-7-deazaguanine (preQ(0)). The protein is 7-cyano-7-deazaguanine synthase of Chlorobium phaeobacteroides (strain DSM 266 / SMG 266 / 2430).